Here is a 354-residue protein sequence, read N- to C-terminus: Uroporphyrinogen decarboxylase (354 aa).

Substrate contacts are provided by residues 27-31, Phe-46, Asp-77, Tyr-154, Ser-209, and His-327; that span reads RQAGR.

The protein belongs to the uroporphyrinogen decarboxylase family. In terms of assembly, homodimer.

Its subcellular location is the cytoplasm. It catalyses the reaction uroporphyrinogen III + 4 H(+) = coproporphyrinogen III + 4 CO2. The protein operates within porphyrin-containing compound metabolism; protoporphyrin-IX biosynthesis; coproporphyrinogen-III from 5-aminolevulinate: step 4/4. In terms of biological role, catalyzes the decarboxylation of four acetate groups of uroporphyrinogen-III to yield coproporphyrinogen-III. The protein is Uroporphyrinogen decarboxylase of Shewanella oneidensis (strain ATCC 700550 / JCM 31522 / CIP 106686 / LMG 19005 / NCIMB 14063 / MR-1).